A 194-amino-acid chain; its full sequence is Ribonuclease HII (194 aa).

The 191-residue stretch at 3–193 (ILTAGVDEAG…VRNLLAQQAL (191 aa)) folds into the RNase H type-2 domain. Asp9, Glu10, and Asp101 together coordinate a divalent metal cation.

The protein belongs to the RNase HII family. The cofactor is Mn(2+). Mg(2+) is required as a cofactor.

It localises to the cytoplasm. The enzyme catalyses Endonucleolytic cleavage to 5'-phosphomonoester.. Its function is as follows. Endonuclease that specifically degrades the RNA of RNA-DNA hybrids. The chain is Ribonuclease HII from Neisseria gonorrhoeae (strain ATCC 700825 / FA 1090).